We begin with the raw amino-acid sequence, 244 residues long: 3-deoxy-manno-octulosonate cytidylyltransferase (244 aa).

This sequence belongs to the KdsB family.

Its subcellular location is the cytoplasm. It catalyses the reaction 3-deoxy-alpha-D-manno-oct-2-ulosonate + CTP = CMP-3-deoxy-beta-D-manno-octulosonate + diphosphate. It participates in nucleotide-sugar biosynthesis; CMP-3-deoxy-D-manno-octulosonate biosynthesis; CMP-3-deoxy-D-manno-octulosonate from 3-deoxy-D-manno-octulosonate and CTP: step 1/1. Its pathway is bacterial outer membrane biogenesis; lipopolysaccharide biosynthesis. In terms of biological role, activates KDO (a required 8-carbon sugar) for incorporation into bacterial lipopolysaccharide in Gram-negative bacteria. This Vesicomyosocius okutanii subsp. Calyptogena okutanii (strain HA) protein is 3-deoxy-manno-octulosonate cytidylyltransferase.